We begin with the raw amino-acid sequence, 247 residues long: NH(3)-dependent NAD(+) synthetase (247 aa).

29 to 36 (GLSGGVDS) contacts ATP. Aspartate 35 lines the Mg(2+) pocket. Residue arginine 112 participates in deamido-NAD(+) binding. Threonine 132 lines the ATP pocket. Glutamate 137 contacts Mg(2+). Residues lysine 145 and aspartate 152 each coordinate deamido-NAD(+). 2 residues coordinate ATP: lysine 161 and serine 183. 233 to 234 (HK) is a deamido-NAD(+) binding site.

The protein belongs to the NAD synthetase family. As to quaternary structure, homodimer.

It carries out the reaction deamido-NAD(+) + NH4(+) + ATP = AMP + diphosphate + NAD(+) + H(+). It participates in cofactor biosynthesis; NAD(+) biosynthesis; NAD(+) from deamido-NAD(+) (ammonia route): step 1/1. Functionally, catalyzes the ATP-dependent amidation of deamido-NAD to form NAD. Uses ammonia as a nitrogen source. The polypeptide is NH(3)-dependent NAD(+) synthetase (Archaeoglobus fulgidus (strain ATCC 49558 / DSM 4304 / JCM 9628 / NBRC 100126 / VC-16)).